A 38-amino-acid polypeptide reads, in one-letter code: Large ribosomal subunit protein bL36 (38 aa).

The protein belongs to the bacterial ribosomal protein bL36 family.

This chain is Large ribosomal subunit protein bL36, found in Psychrobacter arcticus (strain DSM 17307 / VKM B-2377 / 273-4).